A 264-amino-acid chain; its full sequence is Small ribosomal subunit protein eS1 (264 aa).

N6-acetyllysine; alternate is present on Lys34. Residue Lys34 forms a Glycyl lysine isopeptide (Lys-Gly) (interchain with G-Cter in SUMO2); alternate linkage. An N6-acetyllysine modification is found at Lys56. Tyr155 is subject to ADP-ribosyltyrosine. A disordered region spans residues 232-264 (HGEGGSSGKTTGDETGAKVERADGYEPPVQESV). Ser237 carries the post-translational modification Phosphoserine. The segment covering 242 to 255 (TGDETGAKVERADG) has biased composition (basic and acidic residues). Lys249 is modified (N6-acetyllysine; alternate). A Glycyl lysine isopeptide (Lys-Gly) (interchain with G-Cter in SUMO2); alternate cross-link involves residue Lys249. Tyr256 is subject to Phosphotyrosine. Ser263 is modified (phosphoserine).

It belongs to the eukaryotic ribosomal protein eS1 family. Component of the small ribosomal subunit. Mature ribosomes consist of a small (40S) and a large (60S) subunit. The 40S subunit contains about 33 different proteins and 1 molecule of RNA (18S). The 60S subunit contains about 49 different proteins and 3 molecules of RNA (28S, 5.8S and 5S). Identified in a IGF2BP1-dependent mRNP granule complex containing untranslated mRNAs. Binds with high affinity to IPO4. Interacts with DDIT3. Part of the small subunit (SSU) processome, composed of more than 70 proteins and the RNA chaperone small nucleolar RNA (snoRNA) U3. In terms of processing, the protein designated S3b has the same amino acid sequence as S3a except that it lacks the C-terminal 12 residues. It is probable that S3a is converted by proteolysis, either physiologically or fortuitously, to S3b. Post-translationally, ADP-ribosylated at Tyr-155 by PARP1 in presence of HPF1.

The protein localises to the cytoplasm. It localises to the nucleus. Its subcellular location is the nucleolus. Its function is as follows. Component of the small ribosomal subunit. The ribosome is a large ribonucleoprotein complex responsible for the synthesis of proteins in the cell. Part of the small subunit (SSU) processome, first precursor of the small eukaryotic ribosomal subunit. During the assembly of the SSU processome in the nucleolus, many ribosome biogenesis factors, an RNA chaperone and ribosomal proteins associate with the nascent pre-rRNA and work in concert to generate RNA folding, modifications, rearrangements and cleavage as well as targeted degradation of pre-ribosomal RNA by the RNA exosome. May play a role during erythropoiesis through regulation of transcription factor DDIT3. This chain is Small ribosomal subunit protein eS1 (Rps3a), found in Rattus norvegicus (Rat).